The chain runs to 141 residues: Cystatin-S (141 aa).

The N-terminal stretch at 1–20 (MARPLCTLLLLMATLAGALA) is a signal peptide. Serine 21 and serine 23 each carry phosphoserine. A Secondary area of contact motif is present at residues 76–80 (QTFGG). Cystine bridges form between cysteine 94–cysteine 104 and cysteine 118–cysteine 138.

This sequence belongs to the cystatin family. Post-translationally, phosphorylated at both its N- and C-terminal regions. Expressed in submandibular and sublingual saliva but not in parotid saliva (at protein level). Expressed in saliva, tears, urine and seminal fluid.

Its subcellular location is the secreted. Functionally, this protein strongly inhibits papain and ficin, partially inhibits stem bromelain and bovine cathepsin C, but does not inhibit porcine cathepsin B or clostripain. Papain is inhibited non-competitively. This chain is Cystatin-S (CST4), found in Homo sapiens (Human).